The sequence spans 45 residues: DVCDSLVGGRCIHNGCYCERDAPNGNCCNTDGCTARWWCPGTKWD.

4 disulfide bridges follow: C3–C16, C11–C28, C18–C33, and C27–C39. Residue P23 is modified to 4-hydroxyproline. W37 and W38 each carry 6'-bromotryptophan. P40 carries the 4-hydroxyproline modification. W44 is modified (6'-bromotryptophan).

Expressed by the venom duct.

Its subcellular location is the secreted. Mu-conotoxins block voltage-gated sodium channels. This toxin reversibly blocks voltage-gated sodium channel in cephalopods, with no alteration in the voltage dependence of sodium conductance or on the kinetics of inactivation. The chain is Mu-conotoxin-like Cal 12.1.2c from Californiconus californicus (California cone).